The sequence spans 234 residues: Alpha N-terminal protein methyltransferase 1 (234 aa).

S-adenosyl-L-methionine-binding positions include glycine 71, arginine 76, 93–95, 120–121, and glutamine 136; these read DVV and LQ.

The protein belongs to the methyltransferase superfamily. NTM1 family. In terms of tissue distribution, expressed in uterine cells and PVT neurons of the tail. Expressed in pharynx, intestine and DVB tail neuron.

The catalysed reaction is N-terminal L-alanyl-L-prolyl-L-lysyl-[protein] + 3 S-adenosyl-L-methionine = N-terminal N,N,N-trimethyl-L-alanyl-L-prolyl-L-lysyl-[protein] + 3 S-adenosyl-L-homocysteine + 3 H(+). It catalyses the reaction N-terminal L-seryl-L-prolyl-L-lysyl-[protein] + 3 S-adenosyl-L-methionine = N-terminal N,N,N-trimethyl-L-seryl-L-prolyl-L-lysyl-[protein] + 3 S-adenosyl-L-homocysteine + 3 H(+). The enzyme catalyses N-terminal L-prolyl-L-prolyl-L-lysyl-[protein] + 2 S-adenosyl-L-methionine = N-terminal N,N-dimethyl-L-prolyl-L-prolyl-L-lysyl-[protein] + 2 S-adenosyl-L-homocysteine + 2 H(+). Functionally, alpha-N-methyltransferase that methylates the N-terminus of target proteins containing the N-terminal motif [Ala/Pro/Ser]-Pro-Lys when the initiator Met is cleaved. Specifically catalyzes mono-, di- or tri-methylation of exposed alpha-amino group of Ala or Ser residue in the [Ala/Ser]-Pro-Lys motif and mono- or di-methylation of Pro in the Pro-Pro-Lys motif. Probably required for the synthesis of neurotransmitter melatonin from serotonin, which plays a role in promoting a sleep-like state, called lethargus, during larval development. In Caenorhabditis elegans, this protein is Alpha N-terminal protein methyltransferase 1.